A 150-amino-acid polypeptide reads, in one-letter code: Cytochrome c oxidase subunit 5A, mitochondrial (150 aa).

The N-terminal 41 residues, 1 to 41, are a transit peptide targeting the mitochondrion; that stretch reads MLGAALRRCAVAATTWAGPRGLLHSARTPGPAAAIQSVRCY. An SIFI-degron motif is present at residues 2–20; that stretch reads LGAALRRCAVAATTWAGPR. Lys87 and Lys113 each carry N6-acetyllysine. Thr141 is modified (phosphothreonine).

The protein belongs to the cytochrome c oxidase subunit 5A family. As to quaternary structure, component of the cytochrome c oxidase (complex IV, CIV), a multisubunit enzyme composed of 14 subunits. The complex is composed of a catalytic core of 3 subunits MT-CO1, MT-CO2 and MT-CO3, encoded in the mitochondrial DNA, and 11 supernumerary subunits COX4I, COX5A, COX5B, COX6A, COX6B, COX6C, COX7A, COX7B, COX7C, COX8 and NDUFA4, which are encoded in the nuclear genome. The complex exists as a monomer or a dimer and forms supercomplexes (SCs) in the inner mitochondrial membrane with NADH-ubiquinone oxidoreductase (complex I, CI) and ubiquinol-cytochrome c oxidoreductase (cytochrome b-c1 complex, complex III, CIII), resulting in different assemblies (supercomplex SCI(1)III(2)IV(1) and megacomplex MCI(2)III(2)IV(2)). Interacts with AFG1L. Interacts with RAB5IF. In response to mitochondrial stress, the precursor protein is ubiquitinated by the SIFI complex in the cytoplasm before mitochondrial import, leading to its degradation. Within the SIFI complex, UBR4 initiates ubiquitin chain that are further elongated or branched by KCMF1.

Its subcellular location is the mitochondrion inner membrane. The protein operates within energy metabolism; oxidative phosphorylation. Component of the cytochrome c oxidase, the last enzyme in the mitochondrial electron transport chain which drives oxidative phosphorylation. The respiratory chain contains 3 multisubunit complexes succinate dehydrogenase (complex II, CII), ubiquinol-cytochrome c oxidoreductase (cytochrome b-c1 complex, complex III, CIII) and cytochrome c oxidase (complex IV, CIV), that cooperate to transfer electrons derived from NADH and succinate to molecular oxygen, creating an electrochemical gradient over the inner membrane that drives transmembrane transport and the ATP synthase. Cytochrome c oxidase is the component of the respiratory chain that catalyzes the reduction of oxygen to water. Electrons originating from reduced cytochrome c in the intermembrane space (IMS) are transferred via the dinuclear copper A center (CU(A)) of subunit 2 and heme A of subunit 1 to the active site in subunit 1, a binuclear center (BNC) formed by heme A3 and copper B (CU(B)). The BNC reduces molecular oxygen to 2 water molecules using 4 electrons from cytochrome c in the IMS and 4 protons from the mitochondrial matrix. The sequence is that of Cytochrome c oxidase subunit 5A, mitochondrial (COX5A) from Macaca mulatta (Rhesus macaque).